Consider the following 184-residue polypeptide: Glutathione-regulated potassium-efflux system ancillary protein KefG (184 aa).

The protein belongs to the NAD(P)H dehydrogenase (quinone) family. KefG subfamily. In terms of assembly, interacts with KefB.

It is found in the cell inner membrane. It catalyses the reaction a quinone + NADH + H(+) = a quinol + NAD(+). The enzyme catalyses a quinone + NADPH + H(+) = a quinol + NADP(+). In terms of biological role, regulatory subunit of a potassium efflux system that confers protection against electrophiles. Required for full activity of KefB. The chain is Glutathione-regulated potassium-efflux system ancillary protein KefG from Cronobacter sakazakii (strain ATCC BAA-894) (Enterobacter sakazakii).